Consider the following 396-residue polypeptide: Enoyl-[acyl-carrier-protein] reductase [NADH] (396 aa).

Residues 47-52 (GASTGF), 73-74 (FE), 110-111 (DA), and 138-139 (LA) each bind NAD(+). Y224 is a substrate binding site. Residue Y234 is the Proton donor of the active site. Residues K243 and 272 to 274 (LVT) each bind NAD(+).

This sequence belongs to the TER reductase family. Monomer.

The enzyme catalyses a 2,3-saturated acyl-[ACP] + NAD(+) = a (2E)-enoyl-[ACP] + NADH + H(+). It functions in the pathway lipid metabolism; fatty acid biosynthesis. In terms of biological role, involved in the final reduction of the elongation cycle of fatty acid synthesis (FAS II). Catalyzes the reduction of a carbon-carbon double bond in an enoyl moiety that is covalently linked to an acyl carrier protein (ACP). The polypeptide is Enoyl-[acyl-carrier-protein] reductase [NADH] (Flavobacterium psychrophilum (strain ATCC 49511 / DSM 21280 / CIP 103535 / JIP02/86)).